Reading from the N-terminus, the 329-residue chain is Quinone oxidoreductase (329 aa).

A2 carries the N-acetylalanine modification. K23 bears the N6-acetyllysine mark. NADP(+) contacts are provided by residues Y53, 158–161, G181, H200, N229, 246–249, and 269–271; these read SGGV, VGCR, and VSL. Position 296 is an N6-succinyllysine (K296).

It belongs to the zinc-containing alcohol dehydrogenase family. Quinone oxidoreductase subfamily. In terms of assembly, homotetramer.

Its subcellular location is the cytoplasm. It carries out the reaction 2 a quinone + NADPH + H(+) = 2 a 1,4-benzosemiquinone + NADP(+). In terms of biological role, does not have alcohol dehydrogenase activity. Binds NADP and acts through a one-electron transfer process. Orthoquinones, such as 1,2-naphthoquinone or 9,10-phenanthrenequinone, are the best substrates (in vitro). May act in the detoxification of xenobiotics. Interacts with (AU)-rich elements (ARE) in the 3'-UTR of target mRNA species and enhances their stability. NADPH binding interferes with mRNA binding. The sequence is that of Quinone oxidoreductase (Cryz) from Rattus norvegicus (Rat).